Here is a 415-residue protein sequence, read N- to C-terminus: Interleukin-5 receptor subunit alpha (415 aa).

The signal sequence occupies residues 1-17 (MVPVLLILVGALATLQA). The Extracellular portion of the chain corresponds to 18–339 (DLLNHKKFLL…KERKSLVEWH (322 aa)). Positions 29 to 120 (PPVNFTIKAT…VSAELKAPPG (92 aa)) constitute a Fibronectin type-III 1 domain. Residues asparagine 32 and asparagine 128 are each glycosylated (N-linked (GlcNAc...) asparagine). Disulfide bonds link cysteine 131–cysteine 152 and cysteine 179–cysteine 193. N-linked (GlcNAc...) asparagine glycosylation is found at asparagine 213 and asparagine 241. One can recognise a Fibronectin type-III 2 domain in the interval 238 to 331 (PPRNVTVEIE…WSQPIYVGKE (94 aa)). Cysteine 266 and cysteine 313 are disulfide-bonded. A WSXWS motif motif is present at residues 319 to 323 (WGEWS). Residues 340–361 (LIVLPTAACFVLLIFSLICRVC) traverse the membrane as a helical segment. Residues 362–415 (HLWTRLFPPVPAPKSNIKDLPVVTEYEKPSNETKIEVVHCVEEVGFEVMGNSTF) are Cytoplasmic-facing. Residues 367–375 (LFPPVPAPK) carry the Box 1 motif motif.

In terms of assembly, interacts with IL5. Interacts with CSF2RB. Interacts with JAK2. Interacts with SDCBP. Expressed on eosinophils and basophils. Also on B-cells.

The protein localises to the membrane. Its function is as follows. Cell surface receptor that plays an important role in the survival, differentiation, and chemotaxis of eosinophils. Acts by forming a heterodimeric receptor with CSF2RB subunit and subsequently binding to interleukin-5. In unstimulated conditions, interacts constitutively with JAK2. Heterodimeric receptor activation leads to JAK2 stimulation and subsequent activation of the JAK-STAT pathway. The protein is Interleukin-5 receptor subunit alpha (Il5ra) of Mus musculus (Mouse).